Consider the following 1004-residue polypeptide: Presequence protease, mitochondrial (1004 aa).

A mitochondrion-targeting transit peptide spans 1-34; that stretch reads MLRNAAAGARKAVTELSQFPKPGEKLHGFTLVRS. A Zn(2+)-binding site is contributed by H84. E87 acts as the Proton acceptor in catalysis. Position 88 (H88) interacts with Zn(2+). E160 is a catalytic residue. Residue E188 coordinates Zn(2+).

This sequence belongs to the peptidase M16 family. PreP subfamily. Monomer and homodimer; homodimerization is induced by binding of the substrate. The cofactor is Zn(2+).

It is found in the mitochondrion intermembrane space. It localises to the mitochondrion matrix. Its function is as follows. Degrades mitochondrial transit peptides after their cleavage in the intermembrane space or in the matrix, and presequence peptides; clearance of these peptides is required to keep the presequence processing machinery running. Preferentially cleaves the N-terminal side of paired basic amino acid residues. Also degrades other unstructured peptides. May function as an ATP-dependent peptidase as opposed to a metalloendopeptidase. This Gibberella zeae (strain ATCC MYA-4620 / CBS 123657 / FGSC 9075 / NRRL 31084 / PH-1) (Wheat head blight fungus) protein is Presequence protease, mitochondrial (CYM1).